Reading from the N-terminus, the 1450-residue chain is DNA-directed RNA polymerase III subunit rpc1 (1450 aa).

Zn(2+)-binding residues include C67, C70, C77, H80, C107, C110, and C154. Mg(2+)-binding residues include D491, D493, and D495. The interval 832 to 844 (PTEFFFHTMGGRE) is bridging helix.

This sequence belongs to the RNA polymerase beta' chain family. As to quaternary structure, component of the RNA polymerase III (Pol III) complex consisting of 17 subunits.

The protein resides in the nucleus. It catalyses the reaction RNA(n) + a ribonucleoside 5'-triphosphate = RNA(n+1) + diphosphate. In terms of biological role, DNA-dependent RNA polymerase catalyzes the transcription of DNA into RNA using the four ribonucleoside triphosphates as substrates. Largest and catalytic core component of RNA polymerase III which synthesizes small RNAs, such as 5S rRNA and tRNAs. Forms the polymerase active center together with the second largest subunit. A single-stranded DNA template strand of the promoter is positioned within the central active site cleft of Pol III. A bridging helix emanates from RPC1 and crosses the cleft near the catalytic site and is thought to promote translocation of Pol III by acting as a ratchet that moves the RNA-DNA hybrid through the active site by switching from straight to bent conformations at each step of nucleotide addition. This is DNA-directed RNA polymerase III subunit rpc1 (polr3a) from Dictyostelium discoideum (Social amoeba).